A 520-amino-acid polypeptide reads, in one-letter code: Zinc finger and BTB domain-containing protein 45 (520 aa).

One can recognise a BTB domain in the interval 33–96 (CDVTVRIREA…LYSGSLVVAQ (64 aa)). Disordered stretches follow at residues 182–272 (PAPP…GGAG) and 337–372 (FHLGAPGPPAPTPPTPSGPAPAPPPTFYPTLQPDAA). The segment covering 206–225 (RGEEDDDEETDEETDAEEGE) has biased composition (acidic residues). Residues 342–363 (PGPPAPTPPTPSGPAPAPPPTF) show a composition bias toward pro residues. 4 consecutive C2H2-type zinc fingers follow at residues 412–434 (YECSHCRKTFSSRKNYTKHMFIH), 440–462 (HQCAVCWRSFSLRDYLLKHMVTH), 468–490 (FQCAVCAKRFTQKSSLNVHMRTH), and 495–517 (APCPACGKVFSHRALLERHLAAH).

Belongs to the krueppel C2H2-type zinc-finger protein family.

It localises to the nucleus. Its function is as follows. May be involved in transcriptional regulation. In the central nervous system, may play a role in glial cell differentiation. The protein is Zinc finger and BTB domain-containing protein 45 of Mus musculus (Mouse).